The chain runs to 318 residues: Probable metal transport system membrane protein CT_070 (318 aa).

Transmembrane regions (helical) follow at residues 1–21 (MVAS…LVFF), 39–59 (IQVI…TFLV), 64–84 (AMYA…VCLF), 94–114 (QALT…IHFI), 124–144 (ASTA…LVFL), 170–190 (IFLV…SFVC), 196–216 (IFAF…MLLL), 226–246 (AVGV…AKLI), 252–272 (EMMV…PALS), and 285–305 (TSGL…VFVC).

Belongs to the ABC-3 integral membrane protein family.

It is found in the cell inner membrane. Part of an ATP-driven transport system CT_067/CT_068/CT_069/CT_070 for a metal. In Chlamydia trachomatis serovar D (strain ATCC VR-885 / DSM 19411 / UW-3/Cx), this protein is Probable metal transport system membrane protein CT_070.